A 398-amino-acid polypeptide reads, in one-letter code: Nonsense-mediated decay protein 4 (398 aa).

A disordered region spans residues 327–355 (PVTSNYRGKNNRGRNNRGRRGNKRRERER). Residues 335 to 350 (KNNRGRNNRGRRGNKR) show a composition bias toward basic residues.

Its subcellular location is the cytoplasm. Its function is as follows. Involved in nonsense-mediated decay of mRNAs containing premature stop codons. This chain is Nonsense-mediated decay protein 4 (NMD4), found in Candida albicans (strain SC5314 / ATCC MYA-2876) (Yeast).